Consider the following 201-residue polypeptide: Large ribosomal subunit protein uL4 (201 aa).

The interval 44–71 is disordered; the sequence is RAQKTRAEVTGSGKKPWRQKGTGRARSG.

Belongs to the universal ribosomal protein uL4 family. As to quaternary structure, part of the 50S ribosomal subunit.

In terms of biological role, one of the primary rRNA binding proteins, this protein initially binds near the 5'-end of the 23S rRNA. It is important during the early stages of 50S assembly. It makes multiple contacts with different domains of the 23S rRNA in the assembled 50S subunit and ribosome. Its function is as follows. Forms part of the polypeptide exit tunnel. This Enterobacter sp. (strain 638) protein is Large ribosomal subunit protein uL4.